A 434-amino-acid polypeptide reads, in one-letter code: Beta-enolase (434 aa).

An N-acetylalanine modification is found at alanine 2. Threonine 72 carries the phosphothreonine modification. A phosphoserine mark is found at serine 83 and serine 157. Positions 158 and 167 each coordinate substrate. Serine 176 carries the post-translational modification Phosphoserine. Threonine 205 is subject to Phosphothreonine. Glutamate 210 (proton donor) is an active-site residue. The residue at position 229 (threonine 229) is a Phosphothreonine. Tyrosine 236 is subject to Phosphotyrosine. Aspartate 245 is a Mg(2+) binding site. A Phosphoserine modification is found at serine 263. Residues glutamate 293 and aspartate 318 each contribute to the substrate site. Residues glutamate 293 and aspartate 318 each contribute to the Mg(2+) site. The active-site Proton acceptor is the lysine 343. Residues 370–373 and lysine 394 contribute to the substrate site; that span reads SHRS.

This sequence belongs to the enolase family. Mammalian enolase is composed of 3 isozyme subunits, alpha, beta and gamma, which can form homodimers or heterodimers which are cell-type and development-specific. In vitro, interacts with several glycolytic enzymes including PKM, PGM, CKM and ALDO. Also binds PLG and troponin, in vitro. Interacts with PNKD. Mg(2+) serves as cofactor. In terms of tissue distribution, brain (at protein level). The alpha/alpha homodimer is expressed in embryo and in most adult tissues. The alpha/beta heterodimer and the beta/beta homodimer are found in striated muscle, and the alpha/gamma heterodimer and the gamma/gamma homodimer in neurons. In striated muscle, the fiber-type order of ENO3 expression is IIB &gt; IIX &gt; IIA &gt; I.

The protein localises to the cytoplasm. It carries out the reaction (2R)-2-phosphoglycerate = phosphoenolpyruvate + H2O. It functions in the pathway carbohydrate degradation; glycolysis; pyruvate from D-glyceraldehyde 3-phosphate: step 4/5. Its function is as follows. Glycolytic enzyme that catalyzes the conversion of 2-phosphoglycerate to phosphoenolpyruvate. Appears to have a function in striated muscle development and regeneration. In Mus musculus (Mouse), this protein is Beta-enolase (Eno3).